The following is a 349-amino-acid chain: Phospho-N-acetylmuramoyl-pentapeptide-transferase (349 aa).

Transmembrane regions (helical) follow at residues 13 to 33 (LFFS…SLGV), 69 to 89 (GGGV…LPWG), 91 to 111 (FSTW…WYDD), 129 to 149 (FMVQ…IYGS), 165 to 185 (LSLP…VAII), 197 to 217 (LDGL…FVAL), 228 to 248 (VAYV…YNGF), 252 to 272 (LFMG…CAVM), 278 to 298 (ILVV…LQVL), and 327 to 347 (IVMR…AAVL).

The protein belongs to the glycosyltransferase 4 family. MraY subfamily. Mg(2+) serves as cofactor.

Its subcellular location is the cell inner membrane. It catalyses the reaction UDP-N-acetyl-alpha-D-muramoyl-L-alanyl-gamma-D-glutamyl-meso-2,6-diaminopimeloyl-D-alanyl-D-alanine + di-trans,octa-cis-undecaprenyl phosphate = di-trans,octa-cis-undecaprenyl diphospho-N-acetyl-alpha-D-muramoyl-L-alanyl-D-glutamyl-meso-2,6-diaminopimeloyl-D-alanyl-D-alanine + UMP. Its pathway is cell wall biogenesis; peptidoglycan biosynthesis. In terms of biological role, catalyzes the initial step of the lipid cycle reactions in the biosynthesis of the cell wall peptidoglycan: transfers peptidoglycan precursor phospho-MurNAc-pentapeptide from UDP-MurNAc-pentapeptide onto the lipid carrier undecaprenyl phosphate, yielding undecaprenyl-pyrophosphoryl-MurNAc-pentapeptide, known as lipid I. In Chlamydia pneumoniae (Chlamydophila pneumoniae), this protein is Phospho-N-acetylmuramoyl-pentapeptide-transferase.